The sequence spans 313 residues: Ribosomal RNA small subunit methyltransferase H (313 aa).

S-adenosyl-L-methionine contacts are provided by residues 35–37, Asp55, Phe80, Asp102, and Gln109; that span reads GGH.

It belongs to the methyltransferase superfamily. RsmH family.

The protein localises to the cytoplasm. The catalysed reaction is cytidine(1402) in 16S rRNA + S-adenosyl-L-methionine = N(4)-methylcytidine(1402) in 16S rRNA + S-adenosyl-L-homocysteine + H(+). In terms of biological role, specifically methylates the N4 position of cytidine in position 1402 (C1402) of 16S rRNA. This is Ribosomal RNA small subunit methyltransferase H from Shewanella loihica (strain ATCC BAA-1088 / PV-4).